The following is a 440-amino-acid chain: Chromosomal replication initiator protein DnaA (440 aa).

The domain I, interacts with DnaA modulators stretch occupies residues 1-74 (MNPSQILENL…VQSGNKAIIN (74 aa)). Residues 74–99 (NIQAQSTKQSNKSTKIDIAHIQAQST) are domain II. The domain III, AAA+ region stretch occupies residues 100–316 (ILNPSFTFES…GIIISLNAYA (217 aa)). The ATP site is built by Gly-146, Gly-148, Lys-149, and Thr-150. Residues 317-440 (TILGQEITLE…KNKILIKSQS (124 aa)) form a domain IV, binds dsDNA region.

It belongs to the DnaA family. As to quaternary structure, oligomerizes as a right-handed, spiral filament on DNA at oriC.

The protein localises to the cytoplasm. In terms of biological role, plays an essential role in the initiation and regulation of chromosomal replication. ATP-DnaA binds to the origin of replication (oriC) to initiate formation of the DNA replication initiation complex once per cell cycle. Binds the DnaA box (a 9 base pair repeat at the origin) and separates the double-stranded (ds)DNA. Forms a right-handed helical filament on oriC DNA; dsDNA binds to the exterior of the filament while single-stranded (ss)DNA is stabiized in the filament's interior. The ATP-DnaA-oriC complex binds and stabilizes one strand of the AT-rich DNA unwinding element (DUE), permitting loading of DNA polymerase. After initiation quickly degrades to an ADP-DnaA complex that is not apt for DNA replication. Binds acidic phospholipids. The protein is Chromosomal replication initiator protein DnaA of Campylobacter jejuni subsp. doylei (strain ATCC BAA-1458 / RM4099 / 269.97).